The sequence spans 443 residues: ATP-dependent protease ATPase subunit HslU (443 aa).

ATP is bound by residues Ile18, 60–65 (GVGKTE), Asp256, Glu321, and Arg393.

This sequence belongs to the ClpX chaperone family. HslU subfamily. A double ring-shaped homohexamer of HslV is capped on each side by a ring-shaped HslU homohexamer. The assembly of the HslU/HslV complex is dependent on binding of ATP.

It localises to the cytoplasm. Its function is as follows. ATPase subunit of a proteasome-like degradation complex; this subunit has chaperone activity. The binding of ATP and its subsequent hydrolysis by HslU are essential for unfolding of protein substrates subsequently hydrolyzed by HslV. HslU recognizes the N-terminal part of its protein substrates and unfolds these before they are guided to HslV for hydrolysis. The protein is ATP-dependent protease ATPase subunit HslU of Salmonella typhi.